The sequence spans 352 residues: Uroporphyrinogen decarboxylase (352 aa).

Substrate-binding positions include 27–31 (RQAGR), Asp77, Tyr154, Thr209, and His325.

It belongs to the uroporphyrinogen decarboxylase family. In terms of assembly, homodimer.

The protein localises to the cytoplasm. The enzyme catalyses uroporphyrinogen III + 4 H(+) = coproporphyrinogen III + 4 CO2. The protein operates within porphyrin-containing compound metabolism; protoporphyrin-IX biosynthesis; coproporphyrinogen-III from 5-aminolevulinate: step 4/4. Its function is as follows. Catalyzes the decarboxylation of four acetate groups of uroporphyrinogen-III to yield coproporphyrinogen-III. This is Uroporphyrinogen decarboxylase from Legionella pneumophila (strain Corby).